An 880-amino-acid chain; its full sequence is Probable dipeptidyl-aminopeptidase B (880 aa).

Residues methionine 1–glutamate 26 show a composition bias toward basic and acidic residues. A disordered region spans residues methionine 1–glutamine 71. The Cytoplasmic segment spans residues methionine 1–arginine 93. The segment covering aspartate 30–serine 40 has biased composition (low complexity). A helical; Signal-anchor for type II membrane protein membrane pass occupies residues tryptophan 94 to leucine 114. Topologically, residues methionine 115–arginine 880 are vacuolar. Residue asparagine 533 is glycosylated (N-linked (GlcNAc...) asparagine). Serine 724 acts as the Charge relay system in catalysis. Asparagine 778 is a glycosylation site (N-linked (GlcNAc...) asparagine). Catalysis depends on charge relay system residues aspartate 801 and histidine 834.

It belongs to the peptidase S9B family.

The protein localises to the vacuole membrane. The catalysed reaction is Release of an N-terminal dipeptide, Xaa-Yaa-|-Zaa-, from a polypeptide, preferentially when Yaa is Pro, provided Zaa is neither Pro nor hydroxyproline.. Functionally, type IV dipeptidyl-peptidase which removes N-terminal dipeptides sequentially from polypeptides having unsubstituted N-termini provided that the penultimate residue is proline. The sequence is that of Probable dipeptidyl-aminopeptidase B (dapB) from Pyrenophora tritici-repentis (strain Pt-1C-BFP) (Wheat tan spot fungus).